We begin with the raw amino-acid sequence, 139 residues long: Natriuretic peptide Mf-NP (139 aa).

The N-terminal stretch at methionine 1–glycine 25 is a signal peptide. Positions lysine 26–glutamate 75 are excised as a propeptide. A disulfide bond links cysteine 86 and cysteine 102. A propeptide spanning residues isoleucine 117–glycine 139 is cleaved from the precursor.

This sequence belongs to the natriuretic peptide family. As to expression, expressed by the venom gland.

It localises to the secreted. Natriuretic peptide that dose-dependently induces the rapid relaxation of rat aortic strips phenylephrine-precontracted. Acts by stimulating cGMP production in a dose-dependent manner (by probably activating NPR1 and/or NPR2). May also show potent hypotensive effects. The sequence is that of Natriuretic peptide Mf-NP from Micrurus fulvius (Eastern coral snake).